Consider the following 233-residue polypeptide: Glucosamine-6-phosphate deaminase (233 aa).

D62 acts as the Proton acceptor; for enolization step in catalysis. N128 acts as the For ring-opening step in catalysis. Catalysis depends on H130, which acts as the Proton acceptor; for ring-opening step. Residue E135 is the For ring-opening step of the active site.

This sequence belongs to the glucosamine/galactosamine-6-phosphate isomerase family. NagB subfamily.

The enzyme catalyses alpha-D-glucosamine 6-phosphate + H2O = beta-D-fructose 6-phosphate + NH4(+). It participates in amino-sugar metabolism; N-acetylneuraminate degradation; D-fructose 6-phosphate from N-acetylneuraminate: step 5/5. In terms of biological role, catalyzes the reversible isomerization-deamination of glucosamine 6-phosphate (GlcN6P) to form fructose 6-phosphate (Fru6P) and ammonium ion. The sequence is that of Glucosamine-6-phosphate deaminase from Streptococcus agalactiae serotype Ia (strain ATCC 27591 / A909 / CDC SS700).